Consider the following 859-residue polypeptide: MACQLDLLIGVIFMASPVLVISPCSSDGRIAFFRGCNLTQIPWILNTTTERLLLSFNYISMVVATSFPLLERLQLLELGTQYANLTIGPGAFRNLPNLRILDLGQSQIEVLNRDAFQGLPHLLELRLFSCGLSSAVLSDGYFRNLYSLARLDLSGNQIHSLRLHSSFRELNSLSDVNFAFNQIFTICEDELEPLQGKTLSFFGLKLTKLFSRVSVGWETCRNPFRGVRLETLDLSENGWTVDITRNFSNIIQGSQISSLILKHHIMGPGFGFQNIRDPDQSTFASLARSSVLQLDLSHGFIFSLNPRLFGTLKDLKMLNLAFNKINKIGENAFYGLDSLQVLNLSYNLLGELYNSNFYGLPRVAYVDLQRNHIGIIQDQTFRLLKTLQTLDLRDNALKAIGFIPSIQMVLLGGNKLVHLPHIHFTANFLELSENRLENLSDLYFLLRVPQLQFLILNQNRLSSCKAAHTPSENPSLEQLFLTENMLQLAWETGLCWDVFQGLSRLQILYLSNNYLNFLPPGIFNDLVALRMLSLSANKLTVLSPGSLPANLEILDISRNQLLCPDPALFSSLRVLDITHNEFVCNCELSTFISWLNQTNVTLFGSPADVYCMYPNSLLGGSLYNISTEDCDEEEAMRSLKFSLFILCTVTLTLFLVITLVVIKFRGICFLCYKTIQKLVFKDKVWSLEPGAYRYDAYFCFSSKDFEWAQNALLKHLDAHYSSRNRLRLCFEERDFIPGENHISNIQAAVWGSRKTVCLVSRHFLKDGWCLEAFRYAQSRSLSDLKSILIVVVVGSLSQYQLMRHETIRGFLQKQQYLRWPEDLQDVGWFLDKLSGCILKEEKGKKRSSSIQLRTIATIS.

An N-terminal signal peptide occupies residues 1–26; the sequence is MACQLDLLIGVIFMASPVLVISPCSS. At 27–641 the chain is on the extracellular side; sequence DGRIAFFRGC…EEEAMRSLKF (615 aa). 3 N-linked (GlcNAc...) asparagine glycosylation sites follow: Asn-37, Asn-46, and Asn-84. 9 LRR repeats span residues 45–69, 72–94, 96–118, 121–144, 147–167, 172–193, 198–212, 215–230, and 235–236; these read LNTTTERLLLSFNYISMVVATSFPL, RLQLLELGTQYANLTIGPGAFRN, PNLRILDLGQSQIEVLNRDAFQG, HLLELRLFSCGLSSAVLSDGYFRN, SLARLDLSGNQIHSLRLHSSF, SLSDVNFAFNQIFTICEDELEP, TLSFFGLKLTKLFSR, VGWETCRNPFRGVRLE, and SE. Asn-246 carries an N-linked (GlcNAc...) asparagine glycan. LRR repeat units lie at residues 261 to 285, 290 to 302, 314 to 335, 338 to 356, 386 to 402, and 413 to 432; these read LKHHIMGPGFGFQNIRDPDQSTFAS, SVLQLDLSHGFIF, DLKMLNLAFNKINKIGENAFYG, SLQVLNLSYNLLGELYNSN, TLQTLDLRDNALKAIGF, and GNKLVHLPHIHFTANFLELS. Asn-343 carries an N-linked (GlcNAc...) asparagine glycan. An N-linked (GlcNAc...) asparagine glycan is attached at Asn-438. LRR repeat units follow at residues 450 to 471, 475 to 496, 504 to 525, 528 to 547, and 550 to 568; these read QLQFLILNQNRLSSCKAAHTPS, SLEQLFLTENMLQLAWETGLCW, RLQILYLSNNYLNFLPPGIFND, ALRMLSLSANKLTVLSPGSL, and NLEILDISRNQLLCPDPAL. Positions 580–632 constitute an LRRCT domain; the sequence is NEFVCNCELSTFISWLNQTNVTLFGSPADVYCMYPNSLLGGSLYNISTEDCDE. Intrachain disulfides connect Cys-584–Cys-611 and Cys-586–Cys-630. N-linked (GlcNAc...) asparagine glycans are attached at residues Asn-596, Asn-599, and Asn-624. A helical membrane pass occupies residues 642 to 662; that stretch reads SLFILCTVTLTLFLVITLVVI. Residues 663-859 lie on the Cytoplasmic side of the membrane; sequence KFRGICFLCY…IQLRTIATIS (197 aa). The TIR domain maps to 692 to 837; it reads YRYDAYFCFS…WFLDKLSGCI (146 aa). Tyr-799 carries the phosphotyrosine modification.

Belongs to the Toll-like receptor family. As to quaternary structure, homodimer. Interacts with MYD88 (via TIR domain). Interacts with TICAM1 (via TIR domain). Interacts with UNC93B1; this interaction is essential for proper TLR5 localization to the plasma membrane. In terms of processing, phosphorylated at Tyr-799 upon flagellin binding; required for signaling. In terms of tissue distribution, highly expressed in liver. Detected in lung and at very low levels in most other tissues.

Its subcellular location is the membrane. Functionally, pattern recognition receptor (PRR) located on the cell surface that participates in the activation of innate immunity and inflammatory response. Recognizes small molecular motifs named pathogen-associated molecular pattern (PAMPs) expressed by pathogens and microbe-associated molecular patterns (MAMPs) usually expressed by resident microbiota. Upon ligand binding such as bacterial flagellins, recruits intracellular adapter proteins MYD88 and TRIF leading to NF-kappa-B activation, cytokine secretion and induction of the inflammatory response. Plays thereby an important role in the relationship between the intestinal epithelium and enteric microbes and contributes to the gut microbiota composition throughout life. This chain is Toll-like receptor 5 (Tlr5), found in Mus musculus (Mouse).